Consider the following 322-residue polypeptide: Altered inheritance of mitochondria protein 32 (322 aa).

Belongs to the AIM32 family.

The chain is Altered inheritance of mitochondria protein 32 (AIM32) from Kluyveromyces lactis (strain ATCC 8585 / CBS 2359 / DSM 70799 / NBRC 1267 / NRRL Y-1140 / WM37) (Yeast).